The sequence spans 749 residues: Cytosolic phospholipase A2 (749 aa).

Residues 1–124 form the C2 domain; the sequence is MASIDPYQHI…GEKKQVPFTF (124 aa). The segment at 1–178 is phospholipid binding; sequence MASIDPYQHI…LRKLLGPEKT (178 aa). 7 residues coordinate Ca(2+): aspartate 40, threonine 41, aspartate 43, asparagine 65, aspartate 93, alanine 94, and asparagine 95. The PLA2c domain maps to 138-740; it reads VCSSTDLRFS…NDVEARKLLH (603 aa). Serine 229 acts as the Nucleophile in catalysis. The interval 417–458 is disordered; sequence MEEEIENLKPKHILGNDSSDSDDEMQEPKGTENSKAEEEYQR. Basic and acidic residues predominate over residues 442–457; that stretch reads QEPKGTENSKAEEEYQ. Catalysis depends on aspartate 549, which acts as the Proton acceptor.

Its subcellular location is the cytoplasm. The protein resides in the cytoplasmic vesicle. It catalyses the reaction a 1,2-diacyl-sn-glycero-3-phosphocholine + H2O = a 1-acyl-sn-glycero-3-phosphocholine + a fatty acid + H(+). It carries out the reaction a 1-acyl-sn-glycero-3-phosphocholine + H2O = sn-glycerol 3-phosphocholine + a fatty acid + H(+). Stimulated by agonists such as ATP, EGF, thrombin and bradykinin as well as by cytosolic Ca(2+). In terms of biological role, selectively hydrolyzes arachidonyl phospholipids in the sn-2 position releasing arachidonic acid. Together with its lysophospholipid activity, it is implicated in the initiation of the inflammatory response. This is Cytosolic phospholipase A2 (pla2g4a) from Xenopus tropicalis (Western clawed frog).